Reading from the N-terminus, the 461-residue chain is General transcription and DNA repair factor IIH subunit SSL1 (461 aa).

The disordered stretch occupies residues 1-70 (MAPVVISESE…RLSNRNLQGS (70 aa)). Residues 26-37 (VHFDGEGDDRVD) are compositionally biased toward basic and acidic residues. Residues 53-63 (HVQRKKKKRLS) show a composition bias toward basic residues. In terms of domain architecture, VWFA spans 125–304 (SLILTLDCSE…THLKELFNEA (180 aa)). The segment at 349 to 366 (CPNCHSKVCSLPTVCPCC) adopts a C4-type zinc-finger fold.

Belongs to the GTF2H2 family. As to quaternary structure, component of the 7-subunit TFIIH core complex composed of XPB/SSL2, XPD/RAD3, SSL1, TFB1, TFB2, TFB4 and TFB5, which is active in NER. The core complex associates with the 3-subunit CTD-kinase module TFIIK composed of CCL1, KIN28 and TFB3 to form the 10-subunit holoenzyme (holo-TFIIH) active in transcription. An additionnal subunit, TFB6, plays a role in the dissociation of the SSL2 helicase from TFIIH after transcription initiation.

It is found in the nucleus. In terms of biological role, component of the general transcription and DNA repair factor IIH (TFIIH) core complex, which is involved in general and transcription-coupled nucleotide excision repair (NER) of damaged DNA and, when complexed to TFIIK, in RNA transcription by RNA polymerase II. In NER, TFIIH acts by opening DNA around the lesion to allow the excision of the damaged oligonucleotide and its replacement by a new DNA fragment. In transcription, TFIIH has an essential role in transcription initiation. When the pre-initiation complex (PIC) has been established, TFIIH is required for promoter opening and promoter escape. Phosphorylation of the C-terminal tail (CTD) of the largest subunit of RNA polymerase II by the kinase module TFIIK controls the initiation of transcription. This is General transcription and DNA repair factor IIH subunit SSL1 (SSL1) from Saccharomyces cerevisiae (strain ATCC 204508 / S288c) (Baker's yeast).